A 314-amino-acid chain; its full sequence is Olfactory receptor 1468 (314 aa).

The Extracellular portion of the chain corresponds to 1 to 25 (MTEENQTVISQFLLLGLPIPSEHQH). N5 carries N-linked (GlcNAc...) asparagine glycosylation. The chain crosses the membrane as a helical span at residues 26 to 49 (VFYALFLSMYLTTVLGNLIIIILI). The Cytoplasmic portion of the chain corresponds to 50-57 (HLDSHLHT). Residues 58-79 (PMYLFLSNLSFSDLCFSSVTMP) traverse the membrane as a helical segment. Residues 80–100 (KLLQNMQSQVPSIPFAGCLTQ) lie on the Extracellular side of the membrane. Residues C97 and C189 are joined by a disulfide bond. The chain crosses the membrane as a helical span at residues 101-120 (LYFYLYFADLESFLLVAMAY). Topologically, residues 121–139 (DRYVAICFPLHYMSIMSPK) are cytoplasmic. A helical membrane pass occupies residues 140 to 158 (LCVSLVVLSWVLTTFHAML). Topologically, residues 159–196 (HTLLMARLSFCADNMIPHFFCDISPLLKLSCSDTHVNE) are extracellular. Residues 197-219 (LVIFVMGGLVIVIPFVLIIVSYA) traverse the membrane as a helical segment. At 220 to 236 (RVVASILKVPSVRGIHK) the chain is on the cytoplasmic side. The helical transmembrane segment at 237–260 (IFSTCGSHLSVVSLFYGTIIGLYL) threads the bilayer. Residues 261 to 272 (CPSANNSTVKET) are Extracellular-facing. Residues 273–292 (VMAMMYTVVTPMLNPFIYSL) form a helical membrane-spanning segment. Over 293–314 (RNRDMKEALIRVLCKKKITFCL) the chain is Cytoplasmic.

Belongs to the G-protein coupled receptor 1 family. Olfactory epithelium.

The protein resides in the cell membrane. Odorant receptor. In Rattus norvegicus (Rat), this protein is Olfactory receptor 1468 (Olr1468).